A 389-amino-acid chain; its full sequence is Ethanolamine-phosphate cytidylyltransferase (389 aa).

Residues 221 to 222, 229 to 232, lysine 259, 307 to 310, and 336 to 340 each bind CTP; these read AF, HVDF, HGKT, and SGNDL. Phosphothreonine occurs at positions 341 and 342.

The protein belongs to the cytidylyltransferase family.

It carries out the reaction phosphoethanolamine + CTP + H(+) = CDP-ethanolamine + diphosphate. Its pathway is phospholipid metabolism; phosphatidylethanolamine biosynthesis; phosphatidylethanolamine from ethanolamine: step 2/3. Its function is as follows. Ethanolamine-phosphate cytidylyltransferase that catalyzes the second step in the synthesis of phosphatidylethanolamine (PE) from ethanolamine via the CDP-ethanolamine pathway. Phosphatidylethanolamine is a dominant inner-leaflet phospholipid in cell membranes, where it plays a role in membrane function by structurally stabilizing membrane-anchored proteins, and participates in important cellular processes such as cell division, cell fusion, blood coagulation, and apoptosis. The protein is Ethanolamine-phosphate cytidylyltransferase (PCYT2) of Bos taurus (Bovine).